Consider the following 358-residue polypeptide: Phenylalanine--tRNA ligase alpha subunit (358 aa).

Mg(2+) is bound at residue Glu-258.

Belongs to the class-II aminoacyl-tRNA synthetase family. Phe-tRNA synthetase alpha subunit type 1 subfamily. Tetramer of two alpha and two beta subunits. Mg(2+) serves as cofactor.

The protein localises to the cytoplasm. It catalyses the reaction tRNA(Phe) + L-phenylalanine + ATP = L-phenylalanyl-tRNA(Phe) + AMP + diphosphate + H(+). The polypeptide is Phenylalanine--tRNA ligase alpha subunit (Rhodospirillum centenum (strain ATCC 51521 / SW)).